Here is a 283-residue protein sequence, read N- to C-terminus: Phosphatidylglycerol--prolipoprotein diacylglyceryl transferase (283 aa).

A run of 3 helical transmembrane segments spans residues 17-37 (LAVR…TFLG), 56-76 (FLTW…VLFY), and 92-112 (WEGG…IWLF). Arginine 139 is a binding site for a 1,2-diacyl-sn-glycero-3-phospho-(1'-sn-glycerol). The next 2 helical transmembrane spans lie at 222 to 242 (GQTA…AEFA) and 255 to 275 (GLSM…VGFV).

The protein belongs to the Lgt family.

The protein resides in the cell inner membrane. The catalysed reaction is L-cysteinyl-[prolipoprotein] + a 1,2-diacyl-sn-glycero-3-phospho-(1'-sn-glycerol) = an S-1,2-diacyl-sn-glyceryl-L-cysteinyl-[prolipoprotein] + sn-glycerol 1-phosphate + H(+). It participates in protein modification; lipoprotein biosynthesis (diacylglyceryl transfer). Its function is as follows. Catalyzes the transfer of the diacylglyceryl group from phosphatidylglycerol to the sulfhydryl group of the N-terminal cysteine of a prolipoprotein, the first step in the formation of mature lipoproteins. In Neisseria gonorrhoeae (strain ATCC 700825 / FA 1090), this protein is Phosphatidylglycerol--prolipoprotein diacylglyceryl transferase.